Consider the following 369-residue polypeptide: C-C chemokine receptor type 9 (369 aa).

Residues 1 to 48 are Extracellular-facing; that stretch reads MTPTDFTSPIPNMADDYGSESTSSMEDYVNFNFTDFYCEKNNVRQFAS. N-linked (GlcNAc...) asparagine glycosylation is present at asparagine 32. Intrachain disulfides connect cysteine 38–cysteine 289 and cysteine 119–cysteine 198. Residues 49-74 traverse the membrane as a helical segment; the sequence is HFLPPLYWLVFIVGALGNSLVILVYW. Residues 75 to 85 lie on the Cytoplasmic side of the membrane; the sequence is YCTRVKTMTDM. A helical transmembrane segment spans residues 86–109; sequence FLLNLAIADLLFLVTLPFWAIAAA. At 110–120 the chain is on the extracellular side; it reads DQWKFQTFMCK. A helical transmembrane segment spans residues 121-150; it reads VVNSMYKMNFYSCVLLIMCISVDRYIAIAQ. At 151 to 159 the chain is on the cytoplasmic side; the sequence is AMRAHTWRE. A helical transmembrane segment spans residues 160–185; it reads KRLLYSKMVCFTIWVLAAALCIPEIL. Topologically, residues 186–208 are extracellular; it reads YSQIKEESGIAICTMVYPSDEST. Residues 209-243 traverse the membrane as a helical segment; sequence KLKSAVLTLKVILGFFLPFVVMACCYTIIIHTLIQ. Residues 244–248 are Cytoplasmic-facing; sequence AKKSS. The helical transmembrane segment at 249-283 threads the bilayer; that stretch reads KHKALKVTITVLTVFVLSQFPYNCILLVQTIDAYA. The Extracellular portion of the chain corresponds to 284-290; that stretch reads MFISNCA. A helical membrane pass occupies residues 291–321; the sequence is VSTNIDICFQVTQTIAFFHSCLNPVLYVFVG. Over 322 to 369 the chain is Cytoplasmic; that stretch reads ERFRRDLVKTLKNLGCISQAQWVSFTRREGSLKLSSMLLETTSGALSL.

Belongs to the G-protein coupled receptor 1 family. In terms of tissue distribution, highly expressed in the thymus and low in lymph nodes and spleen.

It localises to the cell membrane. Receptor for chemokine SCYA25/TECK. Subsequently transduces a signal by increasing the intracellular calcium ions level. Its function is as follows. (Microbial infection) Alternative coreceptor with CD4 for HIV-1 infection. This is C-C chemokine receptor type 9 (CCR9) from Homo sapiens (Human).